The sequence spans 161 residues: Cytochrome c-type biogenesis protein CcmE (161 aa).

Over 1 to 13 (MSWLPKSPKARRR) the chain is Cytoplasmic. The chain crosses the membrane as a helical; Signal-anchor for type II membrane protein span at residues 14 to 34 (LMLVAAIAPVLAVAAGLTLWG). The Periplasmic portion of the chain corresponds to 35-161 (LSDSISFFYT…QRPEHQGDAL (127 aa)). Residues His-128 and Tyr-132 each contribute to the heme site.

It belongs to the CcmE/CycJ family.

It localises to the cell inner membrane. In terms of biological role, heme chaperone required for the biogenesis of c-type cytochromes. Transiently binds heme delivered by CcmC and transfers the heme to apo-cytochromes in a process facilitated by CcmF and CcmH. The chain is Cytochrome c-type biogenesis protein CcmE from Phenylobacterium zucineum (strain HLK1).